We begin with the raw amino-acid sequence, 185 residues long: Lipopolysaccharide export system protein LptA (185 aa).

Residues 1–27 form the signal peptide; that stretch reads MKFKTNKLSLNLVLASSLLAASIPAFA. The segment at 166–185 is disordered; that stretch reads PSQLQDKNNKGQTPAQKKGN.

This sequence belongs to the LptA family. In terms of assembly, component of the lipopolysaccharide transport and assembly complex.

The protein resides in the periplasm. Its function is as follows. Involved in the assembly of lipopolysaccharide (LPS). Required for the translocation of LPS from the inner membrane to the outer membrane. May form a bridge between the inner membrane and the outer membrane, via interactions with LptC and LptD, thereby facilitating LPS transfer across the periplasm. In Escherichia coli O157:H7, this protein is Lipopolysaccharide export system protein LptA.